A 478-amino-acid chain; its full sequence is 2,5-dioxopentanoate dehydrogenase (478 aa).

Residues 148 to 149 (WN), 172 to 175 (KPAT), and 225 to 226 (GS) each bind NADP(+). Residue Glu249 is the Proton acceptor of the active site. The Nucleophile role is filled by Cys283. Residue Glu379 participates in NADP(+) binding.

It belongs to the aldehyde dehydrogenase family. As to quaternary structure, homotetramer.

The catalysed reaction is 2,5-dioxopentanoate + NADP(+) + H2O = 2-oxoglutarate + NADPH + 2 H(+). Functionally, 2,5-dioxopentanoate dehydrogenase involved in the degradation of pentoses such as D-arabinose or D-xylose, a major component of hemicelluloses such as xylan. Catalyzes the fifth reaction in the pentose utilization pathway through dehydratation of 2,5-dioxopentanoate into 2-oxoglutarate. Also shows dehydrogenase activity toward glycolaldehyde and DL-glyceraldehyde. The protein is 2,5-dioxopentanoate dehydrogenase of Saccharolobus solfataricus (strain ATCC 35092 / DSM 1617 / JCM 11322 / P2) (Sulfolobus solfataricus).